A 389-amino-acid chain; its full sequence is Chalcone synthase (389 aa).

The active site involves C164.

The protein belongs to the thiolase-like superfamily. Chalcone/stilbene synthases family.

The enzyme catalyses (E)-4-coumaroyl-CoA + 3 malonyl-CoA + 3 H(+) = 2',4,4',6'-tetrahydroxychalcone + 3 CO2 + 4 CoA. It functions in the pathway secondary metabolite biosynthesis; flavonoid biosynthesis. The primary product of this enzyme is 4,2',4',6'-tetrahydroxychalcone (also termed naringenin-chalcone or chalcone) which can under specific conditions spontaneously isomerize into naringenin. This chain is Chalcone synthase (CHS1), found in Casuarina glauca (Swamp oak).